The primary structure comprises 346 residues: D-alanine--D-alanine ligase A (346 aa).

Positions 138 to 332 (KRLFLAAGVE…FAELCERICR (195 aa)) constitute an ATP-grasp domain. 164 to 217 (QLGFPLVVKPNSQGSTVGLSIVHSQAELQPAIELAGRYGDEVMLERFVAGREVT) is a binding site for ATP. Aspartate 286, glutamate 299, and asparagine 301 together coordinate Mg(2+).

Belongs to the D-alanine--D-alanine ligase family. Mg(2+) serves as cofactor. Requires Mn(2+) as cofactor.

Its subcellular location is the cytoplasm. The catalysed reaction is 2 D-alanine + ATP = D-alanyl-D-alanine + ADP + phosphate + H(+). It participates in cell wall biogenesis; peptidoglycan biosynthesis. Functionally, cell wall formation. This chain is D-alanine--D-alanine ligase A, found in Pseudomonas aeruginosa (strain ATCC 15692 / DSM 22644 / CIP 104116 / JCM 14847 / LMG 12228 / 1C / PRS 101 / PAO1).